The primary structure comprises 26 residues: Aralin B chain (26 aa).

Disulfide-linked dimer of A and B chains. Post-translationally, glycosylated. High-mannose type oligosaccharides.

Its function is as follows. Lectin specific for galactose (Gal) and its derivatives. Induces apoptosis. Has cytotoxic activity against several human cancer cell lines. Is less cytotoxic to normal human cells. The protein is Aralin B chain of Aralia elata (Japanese angelica tree).